The chain runs to 285 residues: Secreted alkaline triacylglycerol lipase (285 aa).

The signal sequence occupies residues 1–20; sequence MLFNYQSLLVGVSLISQALS. Ser-159 (nucleophile) is an active-site residue. Catalysis depends on charge relay system residues Asp-215 and His-268.

Belongs to the AB hydrolase superfamily. FaeA family.

The protein resides in the secreted. The catalysed reaction is a triacylglycerol + H2O = a diacylglycerol + a fatty acid + H(+). In terms of biological role, secreted alkaline lipase that hydrolyzes acylglycerol lipids such as triacylglycerols and consequently releases free fatty acid. Is able to hydrolyze tributyrin (1,2,3-tributyryl-glycerin). This Penicillium cyclopium protein is Secreted alkaline triacylglycerol lipase.